A 352-amino-acid chain; its full sequence is Holliday junction branch migration complex subunit RuvB (352 aa).

The interval 13–201 (LPLRKKELRL…FGISQKIEFY (189 aa)) is large ATPase domain (RuvB-L). ATP contacts are provided by residues Arg-41, Gly-82, Lys-85, Thr-86, Thr-87, 148–150 (EDF), Arg-191, Tyr-201, and Arg-238. Thr-86 contributes to the Mg(2+) binding site. Positions 202-273 (NYDELKQILL…LIKKALNSYQ (72 aa)) are small ATPAse domain (RuvB-S). The tract at residues 276–352 (DKGLDSLDRH…KYIDSKNDDF (77 aa)) is head domain (RuvB-H). DNA is bound by residues Arg-330 and Arg-335.

The protein belongs to the RuvB family. In terms of assembly, homohexamer. Forms an RuvA(8)-RuvB(12)-Holliday junction (HJ) complex. HJ DNA is sandwiched between 2 RuvA tetramers; dsDNA enters through RuvA and exits via RuvB. An RuvB hexamer assembles on each DNA strand where it exits the tetramer. Each RuvB hexamer is contacted by two RuvA subunits (via domain III) on 2 adjacent RuvB subunits; this complex drives branch migration. In the full resolvosome a probable DNA-RuvA(4)-RuvB(12)-RuvC(2) complex forms which resolves the HJ.

The protein localises to the cytoplasm. The enzyme catalyses ATP + H2O = ADP + phosphate + H(+). The RuvA-RuvB-RuvC complex processes Holliday junction (HJ) DNA during genetic recombination and DNA repair, while the RuvA-RuvB complex plays an important role in the rescue of blocked DNA replication forks via replication fork reversal (RFR). RuvA specifically binds to HJ cruciform DNA, conferring on it an open structure. The RuvB hexamer acts as an ATP-dependent pump, pulling dsDNA into and through the RuvAB complex. RuvB forms 2 homohexamers on either side of HJ DNA bound by 1 or 2 RuvA tetramers; 4 subunits per hexamer contact DNA at a time. Coordinated motions by a converter formed by DNA-disengaged RuvB subunits stimulates ATP hydrolysis and nucleotide exchange. Immobilization of the converter enables RuvB to convert the ATP-contained energy into a lever motion, pulling 2 nucleotides of DNA out of the RuvA tetramer per ATP hydrolyzed, thus driving DNA branch migration. The RuvB motors rotate together with the DNA substrate, which together with the progressing nucleotide cycle form the mechanistic basis for DNA recombination by continuous HJ branch migration. Branch migration allows RuvC to scan DNA until it finds its consensus sequence, where it cleaves and resolves cruciform DNA. This is Holliday junction branch migration complex subunit RuvB from Prochlorococcus marinus (strain MIT 9301).